We begin with the raw amino-acid sequence, 85 residues long: UPF0297 protein LBUL_1485 (85 aa).

Belongs to the UPF0297 family.

This Lactobacillus delbrueckii subsp. bulgaricus (strain ATCC BAA-365 / Lb-18) protein is UPF0297 protein LBUL_1485.